A 499-amino-acid polypeptide reads, in one-letter code: Lysosomal Pro-X carboxypeptidase (499 aa).

The signal sequence occupies residues 1-21 (MGRCSLLLLLLLIAFLTPGAA). Residues 22-47 (NPVSPSLRAPSSLPWSTSFRSRPTIT) constitute a propeptide that is removed on maturation. Residue asparagine 103 is glycosylated (N-linked (GlcNAc...) asparagine). The active-site Charge relay system is the serine 181. The SKS domain stretch occupies residues 196–337 (HLVVGALASS…QNIFQALNVY (142 aa)). 4 disulfide bridges follow: cysteine 217–cysteine 375, cysteine 235–cysteine 313, cysteine 266–cysteine 346, and cysteine 367–cysteine 397. The N-linked (GlcNAc...) asparagine glycan is linked to asparagine 234. Asparagine 339 and asparagine 348 each carry an N-linked (GlcNAc...) asparagine glycan. Asparagine 418 is a glycosylation site (N-linked (GlcNAc...) asparagine). Catalysis depends on charge relay system residues aspartate 433 and histidine 458.

The protein belongs to the peptidase S28 family. As to quaternary structure, homodimer.

It is found in the lysosome. The enzyme catalyses Cleavage of a -Pro-|-Xaa bond to release a C-terminal amino acid.. Its function is as follows. Cleaves C-terminal amino acids linked to proline in peptides such as angiotensin II, III and des-Arg9-bradykinin. This cleavage occurs at acidic pH, but enzymatic activity is retained with some substrates at neutral pH. This is Lysosomal Pro-X carboxypeptidase (PRCP) from Bos taurus (Bovine).